The following is a 287-amino-acid chain: Formamidopyrimidine-DNA glycosylase (287 aa).

Residue Pro-2 is the Schiff-base intermediate with DNA of the active site. Glu-3 acts as the Proton donor in catalysis. Residue Lys-58 is the Proton donor; for beta-elimination activity of the active site. His-104, Arg-123, and Arg-166 together coordinate DNA. The FPG-type zinc-finger motif lies at 251-287 (RTYDREGQPCRNDGCRGVIGREVQAGRSTFYCPVCQR). Arg-277 acts as the Proton donor; for delta-elimination activity in catalysis.

The protein belongs to the FPG family. As to quaternary structure, monomer. Zn(2+) is required as a cofactor.

It catalyses the reaction Hydrolysis of DNA containing ring-opened 7-methylguanine residues, releasing 2,6-diamino-4-hydroxy-5-(N-methyl)formamidopyrimidine.. The catalysed reaction is 2'-deoxyribonucleotide-(2'-deoxyribose 5'-phosphate)-2'-deoxyribonucleotide-DNA = a 3'-end 2'-deoxyribonucleotide-(2,3-dehydro-2,3-deoxyribose 5'-phosphate)-DNA + a 5'-end 5'-phospho-2'-deoxyribonucleoside-DNA + H(+). Functionally, involved in base excision repair of DNA damaged by oxidation or by mutagenic agents. Acts as a DNA glycosylase that recognizes and removes damaged bases. Has a preference for oxidized purines, such as 7,8-dihydro-8-oxoguanine (8-oxoG). Has AP (apurinic/apyrimidinic) lyase activity and introduces nicks in the DNA strand. Cleaves the DNA backbone by beta-delta elimination to generate a single-strand break at the site of the removed base with both 3'- and 5'-phosphates. In Phenylobacterium zucineum (strain HLK1), this protein is Formamidopyrimidine-DNA glycosylase.